The chain runs to 486 residues: Cobyric acid synthase (486 aa).

A GATase cobBQ-type domain is found at 248–435 (VLNVVVPVLP…LHGLFESPAA (188 aa)). Catalysis depends on Cys-329, which acts as the Nucleophile. His-427 is a catalytic residue.

It belongs to the CobB/CobQ family. CobQ subfamily.

It participates in cofactor biosynthesis; adenosylcobalamin biosynthesis. Functionally, catalyzes amidations at positions B, D, E, and G on adenosylcobyrinic A,C-diamide. NH(2) groups are provided by glutamine, and one molecule of ATP is hydrogenolyzed for each amidation. The chain is Cobyric acid synthase from Pseudomonas syringae pv. tomato (strain ATCC BAA-871 / DC3000).